Consider the following 170-residue polypeptide: Cathelicidin antimicrobial peptide (170 aa).

The signal sequence occupies residues 1–30 (MKTQRDGHSLGRWSLVLLLLGLVMPLAIVA). The propeptide at 31–131 (QVLSYKEAVL…DISCDKDNKR (101 aa)) is cathelin-like domain (CLD). 2 cysteine pairs are disulfide-bonded: Cys-86–Cys-97 and Cys-108–Cys-125. Residues 150-162 (FKRIVQRIKDFLR) are active core.

This sequence belongs to the cathelicidin family. Monomer, homodimer or homotrimer (in vitro). Oligomerizes as tetra- or hexamer in solution (in vitro). Proteolytically cleaved by proteinase PRTN3 into antibacterial peptide LL-37. Proteolytically cleaved by cathepsin CTSG and neutrophil elastase ELANE. In terms of processing, resistant to proteolytic degradation in solution, and when bound to both zwitterionic (mimicking mammalian membranes) and negatively charged membranes (mimicking bacterial membranes). Post-translationally, after secretion onto the skin surface, the CAMP gene product is processed by a serine protease-dependent mechanism into multiple novel antimicrobial peptides distinct from and shorter than cathelicidin LL-37. These peptides show enhanced antimicrobial action, acquiring the ability to kill skin pathogens such as S.aureus, E.coli and C.albicans. These peptides have lost the ability to stimulate CXCL8/IL8 release from keratinocytes. The peptides act synergistically, killing bacteria at lower concentrations when present together, and maintain activity at increased salt condition.

It localises to the secreted. The protein resides in the vesicle. Its function is as follows. Antimicrobial protein that is an integral component of the innate immune system. Binds to bacterial lipopolysaccharides (LPS). Acts via neutrophil N-formyl peptide receptors to enhance the release of CXCL2. Postsecretory processing generates multiple cathelicidin antimicrobial peptides with various lengths which act as a topical antimicrobial defense in sweat on skin. The unprocessed precursor form, cathelicidin antimicrobial peptide, inhibits the growth of Gram-negative E.coli and E.aerogenes with efficiencies comparable to that of the mature peptide LL-37 (in vitro). Antimicrobial peptide that is an integral component of the innate immune system. Binds to bacterial lipopolysaccharides (LPS). Causes membrane permeabilization by forming transmembrane pores (in vitro). Causes lysis of E.coli. Exhibits antimicrobial activity against Gram-negative bacteria such as P.aeruginosa, S.typhimurium, E.aerogenes, E.coli and P.syringae, Gram-positive bacteria such as L.monocytogenes, S.epidermidis, S.pyogenes and S.aureus, as well as vancomycin-resistant enterococci (in vitro). Exhibits antimicrobial activity against methicillin-resistant S.aureus, P.mirabilis, and C.albicans in low-salt media, but not in media containing 100 mM NaCl (in vitro). Forms chiral supramolecular assemblies with quinolone signal (PQS) molecules of P.aeruginosa, which may lead to interference of bacterial quorum signaling and perturbance of bacterial biofilm formation. May form supramolecular fiber-like assemblies on bacterial membranes. Induces cytokine and chemokine producation as well as TNF/TNFA and CSF2/GMCSF production in normal human keratinocytes. Exhibits hemolytic activity against red blood cells. Functionally, exhibits antimicrobial activity against E.coli and B.megaterium (in vitro). The sequence is that of Cathelicidin antimicrobial peptide from Pan troglodytes (Chimpanzee).